A 61-amino-acid polypeptide reads, in one-letter code: Large ribosomal subunit protein bL32 (61 aa).

Residues 1 to 16 show a composition bias toward basic residues; that stretch reads MAVPKRKTSPSRRGMR. The segment at 1 to 61 is disordered; the sequence is MAVPKRKTSP…RQILKPKAEA (61 aa). The span at 28 to 44 shows a compositional bias: basic and acidic residues; the sequence is VEDKDSGELRRPHHLDL.

This sequence belongs to the bacterial ribosomal protein bL32 family.

The chain is Large ribosomal subunit protein bL32 from Xanthobacter autotrophicus (strain ATCC BAA-1158 / Py2).